The chain runs to 1214 residues: Peregrin (1214 aa).

Residues 21–47 (YECPVETCRKVYKSYSGIEYHLYHYDH) form a C2H2-type zinc finger. Disordered stretches follow at residues 43–87 (YHYD…SPGR) and 118–177 (VVSE…PKLP). Residues 58 to 67 (LRKHKKKGRQ) are compositionally biased toward basic residues. The interval 59-222 (RKHKKKGRQS…VEYDMDEEDY (164 aa)) is interaction with KAT6A and KAT6B. A compositionally biased stretch (low complexity) spans 74–85 (QSPSPSEVSQSP). Residues 119-130 (VSEDEEAPEEAP) are compositionally biased toward acidic residues. The residue at position 120 (Ser-120) is a Phosphoserine. Lys-147 bears the N6-acetyllysine mark. Residues 148–167 (SGKHKNKEKRKDSNHHHHHN) show a composition bias toward basic residues. Ser-238 carries the post-translational modification Phosphoserine. The PHD-type 1 zinc-finger motif lies at 273-323 (DAVCCICNDGECQNSNVILFCDMCNLAVHQECYGVPYIPEGQWLCRRCLQS). The C2HC pre-PHD-type zinc-finger motif lies at 327–360 (AVDCALCPNKGGAFKQTDDGRWAHVVCALWIPEV). The segment at 384-448 (LTCYICKQRG…RKTAYCDIHT (65 aa)) adopts a PHD-type 2 zinc-finger fold. The tract at residues 448 to 489 (TPPGSARRLPALSHSEGEEDEDEEEDEGKGWSSEKVKKAKAK) is disordered. Phosphoserine is present on residues Ser-460 and Ser-462. A compositionally biased stretch (acidic residues) spans 464 to 474 (GEEDEDEEEDE). The interval 501-821 (LAEKRAAAPV…IKKEMTALRR (321 aa)) is interaction with MEAF6 and ING5. The required for RUNX1 and RUNX2 transcriptional activation stretch occupies residues 543–1079 (YWTLKRQSRN…RGAGWLSEDE (537 aa)). N6-acetyllysine is present on Lys-580. Residues 628–732 (MQLTPFLILL…EQGGAVLRQA (105 aa)) form the Bromo domain. The disordered stretch occupies residues 819–1062 (LRRKLAHQRE…VGTGRGVGHS (244 aa)). Residues 825 to 838 (HQRETGRDGPERHG) show a composition bias toward basic and acidic residues. The residue at position 858 (Thr-858) is a Phosphothreonine. The span at 858-871 (TDSAAEESSSQETS) shows a compositional bias: low complexity. Ser-860, Ser-917, Ser-922, and Ser-926 each carry phosphoserine. Over residues 993–1021 (SLPRSSSDSESSSSSSSSAASDRTSTTPS) the composition is skewed to low complexity. Phosphoserine is present on Ser-1076. Residues 1085-1168 (ALDLVWAKCR…RTKLVPLGVN (84 aa)) form the PWWP domain. Ser-1187 carries the phosphoserine modification.

In terms of assembly, component of some HBO1 complex composed of KAT7/HBO1, MEAF6, ING5, and BRPF1. Component of the MOZ/MORF complex composed at least of ING5, KAT6A, KAT6B, MEAF6 and one of BRPF1, BRD1/BRPF2 and BRPF3. Interacts (via PHD-type zinc finger domains) with unmethylated histone H3 at 'Lys-4' (H3K4me0). Interacts with trimethylated 'Lys-36' of histone H3 (H3K36me3). Interacts with ING5; interaction directs BRPF1 to H4K4me3-enriched chromatin at the 5' of active genes. Interacts with KAT7. Acetylated by KAT6A. High levels in testis.

Its subcellular location is the nucleus. It is found in the chromosome. It localises to the cytoplasm. Scaffold subunit of various histone acetyltransferase (HAT) complexes, such as the MOZ/MORF and HBO1 complexes, which have a histone H3 acetyltransferase activity. Plays a key role in HBO1 complex by directing KAT7/HBO1 specificity towards histone H3 'Lys-14' acetylation (H3K14ac). Some HAT complexes preferentially mediate histone H3 'Lys-23' (H3K23ac) acetylation. Positively regulates the transcription of RUNX1 and RUNX2. The protein is Peregrin of Homo sapiens (Human).